The sequence spans 66 residues: Large ribosomal subunit protein uL29 (66 aa).

This sequence belongs to the universal ribosomal protein uL29 family.

This is Large ribosomal subunit protein uL29 from Rhizobium johnstonii (strain DSM 114642 / LMG 32736 / 3841) (Rhizobium leguminosarum bv. viciae).